Here is a 127-residue protein sequence, read N- to C-terminus: MKNPESSGVSSSPQIQRVSPSSSSTSPSPPSIGTSSCFTLSSCTLPIAAVVVAVDVVDIMSVDPLAMTSAFSISSLPTTGPLGTIAVDSITLLYTPICLCYLLVRLRKVNFEGNKLLMVSVVNFVPL.

A disordered region spans residues 1–34; the sequence is MKNPESSGVSSSPQIQRVSPSSSSTSPSPPSIGT. Residues 9–34 are compositionally biased toward low complexity; that stretch reads VSSSPQIQRVSPSSSSTSPSPPSIGT. 2 helical membrane-spanning segments follow: residues 47–67 and 84–104; these read IAAV…PLAM and TIAV…YLLV.

It is found in the membrane. This is an uncharacterized protein from Saccharomyces cerevisiae (strain ATCC 204508 / S288c) (Baker's yeast).